The chain runs to 203 residues: Dephospho-CoA kinase (203 aa).

The 198-residue stretch at 6–203 (KVAITGGLSC…ELYQELKIYI (198 aa)) folds into the DPCK domain. 14–19 (SCGKSS) contributes to the ATP binding site.

The protein belongs to the CoaE family.

It is found in the cytoplasm. The catalysed reaction is 3'-dephospho-CoA + ATP = ADP + CoA + H(+). Its pathway is cofactor biosynthesis; coenzyme A biosynthesis; CoA from (R)-pantothenate: step 5/5. Functionally, catalyzes the phosphorylation of the 3'-hydroxyl group of dephosphocoenzyme A to form coenzyme A. This chain is Dephospho-CoA kinase, found in Protochlamydia amoebophila (strain UWE25).